Reading from the N-terminus, the 156-residue chain is MAPAVTRLLFLQLVLGPTLVMDIKMQIGSRNFYTLSIDYPRVNYPKGFRGYCNGLMSYMRGKMQNSDCPKIHYVIHAPWKAIQKFCKYSDSFCENYNEYCTLTQDSLPITVCSLSHQQPPTSCYYNSTLTNQKLYLLCSRKYEADPIGIAGLYSGI.

An N-terminal signal peptide occupies residues 1–20; it reads MAPAVTRLLFLQLVLGPTLV. N-linked (GlcNAc...) asparagine glycosylation occurs at Asn126.

Belongs to the pancreatic ribonuclease family.

It localises to the secreted. Does not exhibit any ribonuclease activity. The chain is Probable inactive ribonuclease-like protein 13 (RNASE13) from Homo sapiens (Human).